A 376-amino-acid chain; its full sequence is Queuine tRNA-ribosyltransferase (376 aa).

The active-site Proton acceptor is Asp93. Residues Asp93–Phe97, Asp147, Gln190, and Gly217 each bind substrate. The segment at Gly248–Asp254 is RNA binding. The active-site Nucleophile is Asp267. Zn(2+)-binding residues include Cys305, Cys307, Cys310, and His336.

Belongs to the queuine tRNA-ribosyltransferase family. Homodimer. Within each dimer, one monomer is responsible for RNA recognition and catalysis, while the other monomer binds to the replacement base PreQ1. The cofactor is Zn(2+).

It carries out the reaction 7-aminomethyl-7-carbaguanine + guanosine(34) in tRNA = 7-aminomethyl-7-carbaguanosine(34) in tRNA + guanine. The protein operates within tRNA modification; tRNA-queuosine biosynthesis. Catalyzes the base-exchange of a guanine (G) residue with the queuine precursor 7-aminomethyl-7-deazaguanine (PreQ1) at position 34 (anticodon wobble position) in tRNAs with GU(N) anticodons (tRNA-Asp, -Asn, -His and -Tyr). Catalysis occurs through a double-displacement mechanism. The nucleophile active site attacks the C1' of nucleotide 34 to detach the guanine base from the RNA, forming a covalent enzyme-RNA intermediate. The proton acceptor active site deprotonates the incoming PreQ1, allowing a nucleophilic attack on the C1' of the ribose to form the product. After dissociation, two additional enzymatic reactions on the tRNA convert PreQ1 to queuine (Q), resulting in the hypermodified nucleoside queuosine (7-(((4,5-cis-dihydroxy-2-cyclopenten-1-yl)amino)methyl)-7-deazaguanosine). The chain is Queuine tRNA-ribosyltransferase from Ruegeria sp. (strain TM1040) (Silicibacter sp.).